The chain runs to 673 residues: DNA ligase (673 aa).

Residues aspartate 35 to aspartate 39, serine 84 to leucine 85, and glutamate 115 contribute to the NAD(+) site. The active-site N6-AMP-lysine intermediate is the lysine 117. NAD(+) is bound by residues arginine 138, glutamate 180, lysine 296, and lysine 320. Cysteine 415, cysteine 418, cysteine 433, and cysteine 438 together coordinate Zn(2+). A BRCT domain is found at glutamate 595–lysine 673.

The protein belongs to the NAD-dependent DNA ligase family. LigA subfamily. It depends on Mg(2+) as a cofactor. Mn(2+) is required as a cofactor.

It carries out the reaction NAD(+) + (deoxyribonucleotide)n-3'-hydroxyl + 5'-phospho-(deoxyribonucleotide)m = (deoxyribonucleotide)n+m + AMP + beta-nicotinamide D-nucleotide.. Its function is as follows. DNA ligase that catalyzes the formation of phosphodiester linkages between 5'-phosphoryl and 3'-hydroxyl groups in double-stranded DNA using NAD as a coenzyme and as the energy source for the reaction. It is essential for DNA replication and repair of damaged DNA. This Koribacter versatilis (strain Ellin345) protein is DNA ligase.